The sequence spans 222 residues: Large ribosomal subunit protein uL1 (222 aa).

It belongs to the universal ribosomal protein uL1 family. As to quaternary structure, part of the 50S ribosomal subunit.

Its function is as follows. Binds directly to 23S rRNA. Probably involved in E site tRNA release. Functionally, protein L1 is also a translational repressor protein, it controls the translation of its operon by binding to its mRNA. The polypeptide is Large ribosomal subunit protein uL1 (Pyrobaculum neutrophilum (strain DSM 2338 / JCM 9278 / NBRC 100436 / V24Sta) (Thermoproteus neutrophilus)).